Reading from the N-terminus, the 337-residue chain is 5-dehydro-2-deoxygluconokinase (337 aa).

It belongs to the carbohydrate kinase PfkB family.

It carries out the reaction 5-dehydro-2-deoxy-D-gluconate + ATP = 6-phospho-5-dehydro-2-deoxy-D-gluconate + ADP + H(+). The protein operates within polyol metabolism; myo-inositol degradation into acetyl-CoA; acetyl-CoA from myo-inositol: step 5/7. In terms of biological role, catalyzes the phosphorylation of 5-dehydro-2-deoxy-D-gluconate (2-deoxy-5-keto-D-gluconate or DKG) to 6-phospho-5-dehydro-2-deoxy-D-gluconate (DKGP). This chain is 5-dehydro-2-deoxygluconokinase, found in Geobacillus thermodenitrificans (strain NG80-2).